Consider the following 119-residue polypeptide: Large ribosomal subunit protein bL20 (119 aa).

This sequence belongs to the bacterial ribosomal protein bL20 family.

In terms of biological role, binds directly to 23S ribosomal RNA and is necessary for the in vitro assembly process of the 50S ribosomal subunit. It is not involved in the protein synthesizing functions of that subunit. The chain is Large ribosomal subunit protein bL20 from Streptococcus pyogenes serotype M1.